Consider the following 249-residue polypeptide: DNA polymerase sliding clamp 1 (249 aa).

It belongs to the PCNA family. Homotrimer. The subunits circularize to form a toroid; DNA passes through its center. Replication factor C (RFC) is required to load the toroid on the DNA.

Functionally, sliding clamp subunit that acts as a moving platform for DNA processing. Responsible for tethering the catalytic subunit of DNA polymerase and other proteins to DNA during high-speed replication. The polypeptide is DNA polymerase sliding clamp 1 (Pyrobaculum aerophilum (strain ATCC 51768 / DSM 7523 / JCM 9630 / CIP 104966 / NBRC 100827 / IM2)).